The chain runs to 401 residues: Phosphoglycerate kinase (401 aa).

Residues 29–31 (DFN), arginine 45, 69–72 (HLGR), arginine 125, and arginine 158 contribute to the substrate site. Residues lysine 209, glutamate 331, and 357–360 (GGDT) each bind ATP.

It belongs to the phosphoglycerate kinase family. In terms of assembly, monomer.

It is found in the cytoplasm. It carries out the reaction (2R)-3-phosphoglycerate + ATP = (2R)-3-phospho-glyceroyl phosphate + ADP. It participates in carbohydrate degradation; glycolysis; pyruvate from D-glyceraldehyde 3-phosphate: step 2/5. The sequence is that of Phosphoglycerate kinase from Wolinella succinogenes (strain ATCC 29543 / DSM 1740 / CCUG 13145 / JCM 31913 / LMG 7466 / NCTC 11488 / FDC 602W) (Vibrio succinogenes).